We begin with the raw amino-acid sequence, 278 residues long: GTPase Era (278 aa).

Residues 7–168 form the Era-type G domain; that stretch reads YCGYIAIVGK…ENLIYPYLPN (162 aa). Residues 15-22 are G1; the sequence is GKPNVGKS. 15-22 lines the GTP pocket; the sequence is GKPNVGKS. The tract at residues 41 to 45 is G2; sequence NTTQK. The tract at residues 62 to 65 is G3; sequence DTPG. GTP-binding positions include 62–66 and 117–120; these read DTPGI and NKID. The G4 stretch occupies residues 117 to 120; that stretch reads NKID. Positions 147-149 are G5; that stretch reads ISA. A KH type-2 domain is found at 199–276; it reads LRDELPSIIT…YLIIWVKVKI (78 aa).

Belongs to the TRAFAC class TrmE-Era-EngA-EngB-Septin-like GTPase superfamily. Era GTPase family. Monomer.

The protein localises to the cytoplasm. It is found in the cell membrane. Functionally, an essential GTPase that binds both GDP and GTP, with rapid nucleotide exchange. Plays a role in 16S rRNA processing and 30S ribosomal subunit biogenesis and possibly also in cell cycle regulation and energy metabolism. The chain is GTPase Era from Buchnera aphidicola subsp. Schizaphis graminum (strain Sg).